We begin with the raw amino-acid sequence, 419 residues long: Serine--tRNA ligase (419 aa).

An L-serine-binding site is contributed by 226 to 228 (TSE). ATP-binding positions include 257–259 (RRE) and Val273. Glu280 is a binding site for L-serine. Position 344–347 (344–347 (ELTS)) interacts with ATP. Thr379 contacts L-serine.

This sequence belongs to the class-II aminoacyl-tRNA synthetase family. Type-1 seryl-tRNA synthetase subfamily. In terms of assembly, homodimer. The tRNA molecule binds across the dimer.

It localises to the cytoplasm. It carries out the reaction tRNA(Ser) + L-serine + ATP = L-seryl-tRNA(Ser) + AMP + diphosphate + H(+). The enzyme catalyses tRNA(Sec) + L-serine + ATP = L-seryl-tRNA(Sec) + AMP + diphosphate + H(+). It participates in aminoacyl-tRNA biosynthesis; selenocysteinyl-tRNA(Sec) biosynthesis; L-seryl-tRNA(Sec) from L-serine and tRNA(Sec): step 1/1. Functionally, catalyzes the attachment of serine to tRNA(Ser). Is also able to aminoacylate tRNA(Sec) with serine, to form the misacylated tRNA L-seryl-tRNA(Sec), which will be further converted into selenocysteinyl-tRNA(Sec). This Mycobacterium tuberculosis (strain CDC 1551 / Oshkosh) protein is Serine--tRNA ligase.